We begin with the raw amino-acid sequence, 500 residues long: Glutathione reductase (500 aa).

Residues Ser12 and Gly13 each coordinate FAD. Residue Ser12 coordinates glutathione. Glutathione is bound at residue Arg19. Positions 32, 39, 40, and 48 each coordinate FAD. An intrachain disulfide couples Cys40 to Cys45. Tyr95 is a glutathione binding site. Ala111 contacts FAD. Ile187, Glu190, Arg207, Arg213, and Gly272 together coordinate NADP(+). Residues Asp312 and Thr354 each coordinate FAD. Arg362 contributes to the glutathione binding site. Val384 contributes to the NADP(+) binding site. Residue His485 coordinates FAD. Catalysis depends on His485, which acts as the Proton acceptor.

The protein belongs to the class-I pyridine nucleotide-disulfide oxidoreductase family. In terms of assembly, homodimer. Requires FAD as cofactor.

It is found in the cytoplasm. The enzyme catalyses 2 glutathione + NADP(+) = glutathione disulfide + NADPH + H(+). Functionally, catalyzes the reduction of glutathione disulfide (GSSG) to reduced glutathione (GSH). Constitutes the major mechanism to maintain a high GSH:GSSG ratio in the cytosol. This is Glutathione reductase from Plasmodium falciparum (isolate K1 / Thailand).